The following is a 177-amino-acid chain: Large ribosomal subunit protein uL6 (177 aa).

This sequence belongs to the universal ribosomal protein uL6 family. Part of the 50S ribosomal subunit.

This protein binds to the 23S rRNA, and is important in its secondary structure. It is located near the subunit interface in the base of the L7/L12 stalk, and near the tRNA binding site of the peptidyltransferase center. This is Large ribosomal subunit protein uL6 from Pseudomonas fluorescens (strain Pf0-1).